Here is a 100-residue protein sequence, read N- to C-terminus: Aspartyl/glutamyl-tRNA(Asn/Gln) amidotransferase subunit C (100 aa).

This sequence belongs to the GatC family. In terms of assembly, heterotrimer of A, B and C subunits.

It catalyses the reaction L-glutamyl-tRNA(Gln) + L-glutamine + ATP + H2O = L-glutaminyl-tRNA(Gln) + L-glutamate + ADP + phosphate + H(+). It carries out the reaction L-aspartyl-tRNA(Asn) + L-glutamine + ATP + H2O = L-asparaginyl-tRNA(Asn) + L-glutamate + ADP + phosphate + 2 H(+). Functionally, allows the formation of correctly charged Asn-tRNA(Asn) or Gln-tRNA(Gln) through the transamidation of misacylated Asp-tRNA(Asn) or Glu-tRNA(Gln) in organisms which lack either or both of asparaginyl-tRNA or glutaminyl-tRNA synthetases. The reaction takes place in the presence of glutamine and ATP through an activated phospho-Asp-tRNA(Asn) or phospho-Glu-tRNA(Gln). The sequence is that of Aspartyl/glutamyl-tRNA(Asn/Gln) amidotransferase subunit C from Streptococcus pneumoniae (strain Hungary19A-6).